A 115-amino-acid polypeptide reads, in one-letter code: MKIALVLLSLLALTLAESNISPPVVKVYTAEPVDFGKTNEVICYVYNYHPPRLEMRLEKNGVEIPDCKQTDPSFQHNWKYYTTKSTHVHIDKGDKVECVVSHNGNPSKKYRLDIF.

A signal peptide spans methionine 1–alanine 16. In terms of domain architecture, Ig-like C1-type spans proline 22–aspartate 113.

Belongs to the beta-2-microglobulin family. Heterodimer of an alpha chain and a beta chain. Beta-2-microglobulin is the beta-chain of major histocompatibility complex class I molecules.

The protein resides in the secreted. In terms of biological role, component of the class I major histocompatibility complex (MHC). Involved in the presentation of peptide antigens to the immune system. The chain is Beta-2-microglobulin (b2m) from Xenopus laevis (African clawed frog).